Here is a 113-residue protein sequence, read N- to C-terminus: UPF0482 protein YnfB (113 aa).

A signal peptide spans 1-28; it reads MNYTLSKRLCLTAMLTLAAVVYTTSAFA.

This sequence belongs to the UPF0482 family.

This Salmonella arizonae (strain ATCC BAA-731 / CDC346-86 / RSK2980) protein is UPF0482 protein YnfB.